Here is a 344-residue protein sequence, read N- to C-terminus: S-adenosylmethionine:tRNA ribosyltransferase-isomerase (344 aa).

It belongs to the QueA family. In terms of assembly, monomer.

The protein localises to the cytoplasm. The enzyme catalyses 7-aminomethyl-7-carbaguanosine(34) in tRNA + S-adenosyl-L-methionine = epoxyqueuosine(34) in tRNA + adenine + L-methionine + 2 H(+). It functions in the pathway tRNA modification; tRNA-queuosine biosynthesis. In terms of biological role, transfers and isomerizes the ribose moiety from AdoMet to the 7-aminomethyl group of 7-deazaguanine (preQ1-tRNA) to give epoxyqueuosine (oQ-tRNA). The sequence is that of S-adenosylmethionine:tRNA ribosyltransferase-isomerase from Acinetobacter baylyi (strain ATCC 33305 / BD413 / ADP1).